A 339-amino-acid polypeptide reads, in one-letter code: Annexin A2 (339 aa).

Ser-2 is modified (N-acetylserine). The segment at 2-24 (STVHEILSKLSLEGDHSLPPSAY) is S100A10-binding site. The residue at position 24 (Tyr-24) is a Phosphotyrosine; by SRC. A Phosphothreonine; by PKC modification is found at Thr-26. 4 Annexin repeats span residues 33 to 104 (FDAD…GLLK), 105 to 176 (TPSQ…ALAK), 189 to 261 (ELID…NLVQ), and 265 to 336 (NKQL…NLCG).

The protein belongs to the annexin family. As to quaternary structure, heterotetramer containing 2 light chains of S100A10/p11 and 2 heavy chains of ANXA2/p36.

It is found in the secreted. The protein resides in the extracellular space. It localises to the extracellular matrix. The protein localises to the basement membrane. In terms of biological role, calcium-regulated membrane-binding protein whose affinity for calcium is greatly enhanced by anionic phospholipids. It binds two calcium ions with high affinity. This Gallus gallus (Chicken) protein is Annexin A2 (ANXA2).